The primary structure comprises 234 residues: O-antigen biosynthesis glycosyltransferase WbnI (234 aa).

Residues 8–13 (ICTGEY), 93–95 (NAV), and 115–118 (HPGY) each bind substrate. The active-site Nucleophile is the Glu185.

The protein belongs to the glycosyltransferase 6 family. Mn(2+) is required as a cofactor.

The enzyme catalyses alpha-L-Fuc-(1-&gt;2)-beta-D-Gal-(1-&gt;3)-alpha-D-GalNAc-(1-&gt;3)-alpha-D-GalNAc-di-trans,octa-cis-undecaprenyl diphosphate + UDP-alpha-D-galactose = alpha-L-Fuc-(1-&gt;2)-[alpha-D-Gal-(1-&gt;3)]-beta-D-Gal-(1-&gt;3)-alpha-D-GalNAc-(1-&gt;3)-alpha-D-GalNAc-di-trans,octa-cis-undecaprenyl diphosphate + UDP + H(+). Its pathway is bacterial outer membrane biogenesis; LPS O-antigen biosynthesis. In terms of biological role, involved in the assembly of the O-repeating unit during O-antigen biosynthesis. This is O-antigen biosynthesis glycosyltransferase WbnI from Escherichia coli.